We begin with the raw amino-acid sequence, 200 residues long: Adenylyl-sulfate kinase (200 aa).

35–42 is an ATP binding site; that stretch reads GLPASGKS. The active-site Phosphoserine intermediate is the S109.

Belongs to the APS kinase family.

It carries out the reaction adenosine 5'-phosphosulfate + ATP = 3'-phosphoadenylyl sulfate + ADP + H(+). The protein operates within sulfur metabolism; hydrogen sulfide biosynthesis; sulfite from sulfate: step 2/3. Functionally, catalyzes the synthesis of activated sulfate. The protein is Adenylyl-sulfate kinase of Thermodesulfovibrio yellowstonii (strain ATCC 51303 / DSM 11347 / YP87).